Reading from the N-terminus, the 166-residue chain is Small ribosomal subunit protein uS5 (166 aa).

One can recognise an S5 DRBM domain in the interval 11–74 (LNEKLIAVNR…EKARRNMFTI (64 aa)).

The protein belongs to the universal ribosomal protein uS5 family. As to quaternary structure, part of the 30S ribosomal subunit. Contacts proteins S4 and S8.

Functionally, with S4 and S12 plays an important role in translational accuracy. In terms of biological role, located at the back of the 30S subunit body where it stabilizes the conformation of the head with respect to the body. The chain is Small ribosomal subunit protein uS5 from Aliivibrio salmonicida (strain LFI1238) (Vibrio salmonicida (strain LFI1238)).